The sequence spans 415 residues: Ribulose bisphosphate carboxylase/oxygenase activase (415 aa).

37–44 (GRKGEGKT) is a binding site for ATP.

The protein belongs to the RuBisCO activase family.

Its function is as follows. Activation of RuBisCO (ribulose-1,5-bisohosphate carboxylase/oxygenase; EC 4.1.1.39) involves the ATP-dependent carboxylation of the epsilon-amino group of lysine leading to a carbamate structure. The protein is Ribulose bisphosphate carboxylase/oxygenase activase (rca) of Anabaena sp. (strain CA / ATCC 33047).